A 727-amino-acid chain; its full sequence is Glycerol-3-phosphate dehydrogenase, mitochondrial (727 aa).

A mitochondrion-targeting transit peptide spans 1-42 (MAFQKAVKRTVLVCGGALATVLGLSQCSHYRRKQVNLACLKA). 71–99 (DILVIGGGATGSGCALDAVTRGLKTALVE) is an FAD binding site. Tyr601 is subject to Phosphotyrosine. EF-hand domains are found at residues 623–658 (SDIERYTKRFHKFDADEKGFITIVDVQRVLENINVK) and 659–694 (IDENTLHEILSEVDLNKNGQVELNEFLQLMSAIQKG). Residues Asp672, Asn674, Asn676, Gln678, and Glu683 each contribute to the Ca(2+) site.

This sequence belongs to the FAD-dependent glycerol-3-phosphate dehydrogenase family. It depends on FAD as a cofactor.

Its subcellular location is the mitochondrion. It catalyses the reaction a quinone + sn-glycerol 3-phosphate = dihydroxyacetone phosphate + a quinol. The protein operates within polyol metabolism; glycerol degradation via glycerol kinase pathway; glycerone phosphate from sn-glycerol 3-phosphate (aerobic route): step 1/1. With respect to regulation, calcium-binding enhance the activity of the enzyme. Calcium-responsive mitochondrial glycerol-3-phosphate dehydrogenase which seems to be a key component of the pancreatic beta-cell glucose-sensing device. The polypeptide is Glycerol-3-phosphate dehydrogenase, mitochondrial (GPD2) (Mesocricetus auratus (Golden hamster)).